The following is a 171-amino-acid chain: MVNNRSSESTTTAVSSNGSPPKACAGCGGKIGDRFLLYSMDRYWHTRCLKCSCCQAQLGEIGTSCYTKSGMILCRNDYIRLFGNSGACNACGQSIPASEMVMRAQGSVYHLKCFTCATCRNRLVPGDRFHYVNGTIFCEHDRPTGLLNGHLNPLQSNPLQGSPMLPDQKVC.

The segment covering 1–19 has biased composition (polar residues); that stretch reads MVNNRSSESTTTAVSSNGS. Residues 1-21 form a disordered region; that stretch reads MVNNRSSESTTTAVSSNGSPP. LIM zinc-binding domains follow at residues 22–84 and 86–148; these read KACA…LFGN and GACN…GLLN.

As to expression, at the start of gastrulation (stage 10), expressed in the mesodermal marginal zone. Shortly after (stage 11), expression is down-regulated in the dorsal most region. During neurulation, expressed in the neural plate and ventral epidermis. At late neurula stages, also expressed more rostrally, and then in the brain, migrating neural crests and ventral epidermis.

Functionally, acts as a positive cofactor of GATA transcription factors to establish the identity of the ventral mesoderm during gastrulation. Down-regulation in the dorsal mesoderm is necessary for the proper formation of this territory since, when present, lmo4 may bind ldb1 and restrict the availability of this cofactor for Spemman organizer transcription factors. At neurula stages, suppresses primary neuron differentiation and modulates gene expression at the Isthmic Organizer of the midbrain-hindbrain boundary. The protein is LIM domain transcription factor LMO4-A (lmo4-a) of Xenopus laevis (African clawed frog).